The following is a 717-amino-acid chain: Delta-1-pyrroline-5-carboxylate synthase (717 aa).

Positions 1-296 are glutamate 5-kinase; the sequence is MDAVDSTRAF…WAPVGDVGAR (296 aa). The substrate site is built by Ser-60, Asp-157, and Asn-176. Residues 196 to 197 and 236 to 242 contribute to the ATP site; these read SD and RGGMTAK. Residues 297–717 are gamma-glutamyl phosphate reductase; that stretch reads DMAVAARESS…YTHKDLTSHA (421 aa).

The protein in the N-terminal section; belongs to the glutamate 5-kinase family. It in the C-terminal section; belongs to the gamma-glutamyl phosphate reductase family. As to expression, expressed at high levels in leaves and is inducible in roots subjected to salt stress.

It catalyses the reaction L-glutamate + ATP = L-glutamyl 5-phosphate + ADP. The enzyme catalyses L-glutamate 5-semialdehyde + phosphate + NADP(+) = L-glutamyl 5-phosphate + NADPH + H(+). It functions in the pathway amino-acid biosynthesis; L-proline biosynthesis; L-glutamate 5-semialdehyde from L-glutamate: step 1/2. Its pathway is amino-acid biosynthesis; L-proline biosynthesis; L-glutamate 5-semialdehyde from L-glutamate: step 2/2. Its activity is regulated as follows. Feedback regulated by proline. P5CS plays a key role in proline biosynthesis, leading to osmoregulation in plants. The polypeptide is Delta-1-pyrroline-5-carboxylate synthase (Actinidia deliciosa (Kiwi)).